The primary structure comprises 415 residues: Protrudin (415 aa).

The tract at residues 1–24 (MQTSDRDLSGPEASPSGMPEVLSE) is disordered. Residues 1-66 (MQTSDRDLSG…AGDGVRYLLR (66 aa)) lie on the Cytoplasmic side of the membrane. Positions 1–92 (MQTSDRDLSG…LFLTLNEGAW (92 aa)) are sufficient for homooligomerization. Residues 1–210 (MQTSDRDLSG…LYLLPLCWVL (210 aa)) form a sufficient for localization to endoplasmic reticulum tubular network and for interactions with REEP1, REEP5, ATL1, ATL2, ATL3 and SPAST region. Residues 51–64 (LEPLKDAGDGVRYL) form a necessary for interaction with RAB11A and function in neurite outgrowth region. A helical transmembrane segment spans residues 67-87 (WQMPLCSLLTCLGLNILFLTL). Position 88 (Asn-88) is a topological domain, lumenal. Residues 89-109 (EGAWYSMGALMISVPALLGYL) traverse the membrane as a helical segment. Over 110–192 (QEVCRGQLPE…NPVVSSQFYG (83 aa)) the chain is Cytoplasmic. Residues 193-213 (ALLGMVCMLYLLPLCWVLALL) constitute an intramembrane region (helical). At 214 to 415 (NSTLFLGNGD…CASCNQTLSK (202 aa)) the chain is on the cytoplasmic side. A disordered region spans residues 254 to 290 (QGAGGRGLLDSSPAPTPTEDLTPGSVEEAEEAEPDEE). The necessary for interaction with KIF5A stretch occupies residues 275–365 (TPGSVEEAEE…GCAATFSVLK (91 aa)). Residues 280–290 (EEAEEAEPDEE) show a composition bias toward acidic residues. Residues 290–296 (EFKDAIE) are necessary for interaction with VAPA. The FYVE-type zinc finger occupies 348 to 414 (TNNFGNCAGC…VCASCNQTLS (67 aa)). Positions 354, 357, 370, 373, 378, 381, 406, and 409 each coordinate Zn(2+).

In terms of assembly, can form homooligomers (monomers, dimers and tetramers). Interacts with RAB11A (GDP-bound form); regulates RAB11A. Interacts with FKBP8; may negatively regulate ZFYVE27 phosphorylation. Isoform 1 interacts to a greater extent than isoform 2 with VAPB (via MSP domain). Isoform 1 interacts to a greater extent than isoform 2 with VAPA (via MSP domain). Interaction with VAPA may regulate ZFYVE27 retention in the endoplasmic reticulum and its function in cell projections formation. Interacts with ATL2, ATL3, SPAST and RTN3. Interacts with REEP1, REEP5 and ATL1. Interacts with RAB11B (GDP-bound form), SURF4, KIF5B and KIF5C. Isoform 1 and 2 interact with KIFA. In terms of processing, phosphorylated. Phosphorylation is induced by NGF through the MAPK/ERK pathway and modulates interaction with RAB11A. Astrocytes express both isoform 1 and isoform 2 and oligodendrocytes express only isoform 2 (at protein level). Isoform 1 is expressed specifically in the central nervous system and selectively in neuronal cells. Isoform 2 is expressed in cerebrum, cerebellum, spinal cord, heart, thymus, spleen, intestine and lung.

It localises to the recycling endosome membrane. It is found in the endoplasmic reticulum membrane. Its subcellular location is the cell projection. The protein resides in the growth cone membrane. In terms of biological role, key regulator of RAB11-dependent vesicular trafficking during neurite extension through polarized membrane transport. Promotes axonal elongation and contributes to the establishment of neuronal cell polarity. Involved in nerve growth factor-induced neurite formation in VAPA-dependent manner. Contributes to both the formation and stabilization of the tubular ER network. Involved in ER morphogenesis by regulating the sheet-to-tubule balance and possibly the density of tubule interconnections. Acts as an adapter protein that facilitates the interaction of KIF5A with VAPA, VAPB, SURF4, RAB11A, RAB11B and RTN3 and the ZFYVE27-KIF5A complex contributes to the transport of these proteins in neurons. Can induce formation of neurite-like membrane protrusions in non-neuronal cells in a KIF5A/B-dependent manner. The protein is Protrudin (Zfyve27) of Mus musculus (Mouse).